Reading from the N-terminus, the 584-residue chain is MAAAVAPLSPQPRGAAASAALSPTRISRLQEKEELRQLNDRLAVYIDKVRSLETENSALQRRVSEREQVCGREISGLKELFETELADARKTLDDTARERAKLQIELGKLRAEHEQVLSSYAKKDSDLNAAQVKLREFEAALNAKEAALATALGDKRSQEEELEDLRDQIAQLEVSLAAAKKELADETLQKVDLENRCQSLIEDLEFRKNVYEEEIKETRRKHETRLVEVDSGRQIEYEYKLAQALKEIREQHDAQVKLYKEELEQTYSSKLENIRQSSEMHSCTANTVREELHESRMRIETLSSHIADIQKESRAWQDRVHELEDTLSKERENYRKILAENEREVAEMRNQMQQQFSDYEQLLDVKLALDMEISAYRKLLESEEERLRLSPGPSSRVTVSRASSSRSVRTTRGKRKRIDVEESEASSSVSISHSASATGNISIEEIDVDGKFIRLKNTSEQDQPMGGWEMIRKIGDTSASYRYTSRYVLKAGQTVTIWAANAGVTASPPTDLIWKNQNSWGTGEDVKVVLKNSQGEEVAQRSTVFKTTVNEGEEEEEEGEEEILEDVIHQQGSPRKPERSCVVM.

The segment at 1 to 22 (MAAAVAPLSPQPRGAAASAALS) is disordered. The tract at residues 2–33 (AAAVAPLSPQPRGAAASAALSPTRISRLQEKE) is head. Ser-22 carries the phosphoserine modification. The IF rod domain occupies 31 to 387 (EKEELRQLND…KLLESEEERL (357 aa)). The coil 1A stretch occupies residues 34 to 70 (ELRQLNDRLAVYIDKVRSLETENSALQRRVSEREQVC). Positions 81–218 (FETELADARK…NVYEEEIKET (138 aa)) are coil 1B. The tract at residues 243–385 (QALKEIREQH…YRKLLESEEE (143 aa)) is coil 2. Residues 386–584 (RLRLSPGPSS…RKPERSCVVM (199 aa)) form a tail region. Disordered regions lie at residues 388–431 (RLSP…SVSI) and 548–584 (TVNEGEEEEEEGEEEILEDVIHQQGSPRKPERSCVVM). Residues 394–408 (SSRVTVSRASSSRSV) are compositionally biased toward low complexity. The Nuclear localization signal motif lies at 414–419 (KRKRID). Residues 429–545 (VSISHSASAT…EEVAQRSTVF (117 aa)) enclose the LTD domain. Acidic residues predominate over residues 551-565 (EGEEEEEEGEEEILE). Residues 575 to 584 (RKPERSCVVM) show a composition bias toward basic and acidic residues. At Cys-581 the chain carries Cysteine methyl ester. Residue Cys-581 is the site of S-farnesyl cysteine attachment. The propeptide at 582–584 (VVM) is removed in mature form.

The protein belongs to the intermediate filament family. As to quaternary structure, homodimer. Lamin dimers then assemble into dimeric head-to-tail polymers. Ultimately, two head-to-tail polymers assemble laterally into a protofilament with a uniformly shaped rod of 3.5 nm in diameter. In terms of processing, phosphorylation plays a key role in lamin organization, subcellular localization and nuclear envelope disintegration. Phosphorylation by CDK1 at Ser-22 at the onset of mitosis drives lamin disassembly and nuclear envelope breakdown.

It localises to the nucleus lamina. The protein resides in the nucleus envelope. The protein localises to the nucleus. It is found in the nucleoplasm. Its subcellular location is the nucleus matrix. In terms of biological role, lamins are intermediate filament proteins that assemble into a filamentous meshwork, and which constitute the major components of the nuclear lamina, a fibrous layer on the nucleoplasmic side of the inner nuclear membrane. Lamins provide a framework for the nuclear envelope, bridging the nuclear envelope and chromatin. Plays an important role in nuclear assembly, chromatin organization, nuclear membrane and telomere dynamics. This is Lamin-B1 (LMNB1) from Gallus gallus (Chicken).